Reading from the N-terminus, the 357-residue chain is G-protein coupled receptor 183 (357 aa).

At 1–27 (MANNFTTPLATSHGNNCDLYAHHSTAR) the chain is on the extracellular side. The N-linked (GlcNAc...) asparagine glycan is linked to N4. A helical transmembrane segment spans residues 28 to 53 (VLMPLHYSLVFIIGLVGNLLALVVIV). Over 54–73 (QNRKKINSTTLYSMNLVISD) the chain is Cytoplasmic. The chain crosses the membrane as a helical span at residues 74-91 (ILFTTALPTRIAYYALGF). R83 serves as a coordination point for 7alpha,25-dihydroxycholesterol. The Extracellular portion of the chain corresponds to 92–101 (DWRIGDALCR). An intrachain disulfide couples C100 to C177. A helical transmembrane segment spans residues 102-123 (VTALVFYINTYAGVNFMTCLSI). 7alpha,25-dihydroxycholesterol contacts are provided by Y108 and Y112. The interval 122-130 (SIDRFFAVV) is interaction with G proteins. The Cytoplasmic portion of the chain corresponds to 124–145 (DRFFAVVHPLRYNKIKRIEYAK). Residues 146–164 (GVCLSVWILVFAQTLPLLL) traverse the membrane as a helical segment. Residues 165 to 188 (TPMSKEEGDKTTCMEYPNFEGTAS) lie on the Extracellular side of the membrane. Residues 189-211 (LPWILLGACLLGYVLPITVILLC) traverse the membrane as a helical segment. Residues 212–237 (YSQICCKLFRTAKQNPLTEKSGVNKK) are Cytoplasmic-facing. Residues 238–261 (ALNTIILIIVVFILCFTPYHVAII) traverse the membrane as a helical segment. Y256 lines the 7alpha,25-dihydroxycholesterol pocket. Topologically, residues 262-283 (QHMIKMLCSPGALECGARHSFQ) are extracellular. The helical transmembrane segment at 284 to 308 (ISLHFTVCLMNFNCCMDPFIYFFAC) threads the bilayer. Topologically, residues 309-357 (KGYKRKVMKMLKRQVSVSISSAVRSAPEENSREMTESQMMIHSKASNGR) are cytoplasmic. S324 and S345 each carry phosphoserine. The disordered stretch occupies residues 336 to 357 (EENSREMTESQMMIHSKASNGR). Over residues 344-357 (ESQMMIHSKASNGR) the composition is skewed to polar residues.

The protein belongs to the G-protein coupled receptor 1 family. Homodimer and heterodimer. Heterodimerizes with CXCR5; leading to modulate the interaction between of CXCL13 and CXCR5. In terms of tissue distribution, expressed in mature B-cells and increases in expression early after activation, before being down-regulated in germinal center B-cells. Expressed in astrocytes. Specifically expressed in CD4(+) dendritic cells but not in CD8(+) dendritic cells. Expressed in monocyte/osteoclasts precursors and mature osteoclasts.

It localises to the cell membrane. Its function is as follows. G-protein coupled receptor expressed in lymphocytes that acts as a chemotactic receptor for B-cells, T-cells, splenic dendritic cells, monocytes/macrophages and astrocytes. Receptor for oxysterol 7-alpha,25-dihydroxycholesterol (7-alpha,25-OHC) and other related oxysterols. Mediates cell positioning and movement of a number of cells by binding the 7-alpha,25-OHC ligand that forms a chemotactic gradient. Binding of 7-alpha,25-OHC mediates the correct localization of B-cells during humoral immune responses. Collaborates with CXCR5 to mediate B-cell migration; probably by forming a heterodimer with CXCR5 that affects the interaction between of CXCL13 and CXCR5. Guides B-cell movement along the B-cell zone-T-cell zone boundary and later to interfollicular and outer follicular regions. Its specific expression during B-cell maturation helps position B-cells appropriately for mounting T-dependent antibody responses. Also acts as a chemotactic receptor for some T-cells upon binding to 7-alpha,25-OHC ligand. Promotes follicular helper T (Tfh) cells differentiation by positioning activated T-cells at the follicle-T-zone interface, promoting contact of newly activated CD4 T-cells with activated dendritic cells and exposing them to Tfh-cell-promoting inducible costimulator (ICOS) ligand. Expression in splenic dendritic cells is required for their homeostasis, localization and ability to induce B- and T-cell responses: GPR183 acts as a chemotactic receptor in dendritic cells that mediates the accumulation of CD4(+) dendritic cells in bridging channels. Regulates migration of astrocytes and is involved in communication between astrocytes and macrophages. Promotes osteoclast precursor migration to bone surfaces. Signals constitutively through G(i)-alpha, but not G(s)-alpha or G(q)-alpha. Signals constitutively also via MAPK1/3 (ERK1/2). This is G-protein coupled receptor 183 from Mus musculus (Mouse).